The primary structure comprises 60 residues: UPF0434 protein NMCC_0628 (60 aa).

This sequence belongs to the UPF0434 family.

In Neisseria meningitidis serogroup C (strain 053442), this protein is UPF0434 protein NMCC_0628.